The primary structure comprises 368 residues: (3S,6E)-nerolidol synthase (368 aa).

D91, N228, and S232 together coordinate Mg(2+). A DDXXE motif motif is present at residues D91–E95.

Belongs to the terpene synthase family. Requires Mg(2+) as cofactor. Mn(2+) is required as a cofactor.

The catalysed reaction is (2E,6E)-farnesyl diphosphate + H2O = (3S,6E)-nerolidol + diphosphate. The enzyme catalyses (2E)-geranyl diphosphate + H2O = (S)-linalool + diphosphate. It participates in secondary metabolite biosynthesis; terpenoid biosynthesis. Functionally, sesquiterpene synthase converting farnesyl diphosphate to nerolidol. Also has a monoterpene synthase activity, converting geranyl diphosphate into linalool as the major product. Has no diterpene synthase activity. The chain is (3S,6E)-nerolidol synthase from Selaginella moellendorffii (Spikemoss).